A 1076-amino-acid chain; its full sequence is Hormone-sensitive lipase (1076 aa).

Composition is skewed to polar residues over residues 1–12 (MEPGSKSVSRSD) and 38–64 (ESKTLQGSNTQQKPASNQRPLTQQETP). Disordered stretches follow at residues 1–198 (MEPG…KSKQ) and 229–250 (VTDSESESDVGSSSDTDSPATM). Residues 65–77 (AQHDAESQKEPRA) are compositionally biased toward basic and acidic residues. The span at 94–116 (APQQSPYIQRVLLTQQEAASQQG) shows a compositional bias: polar residues. Over residues 140–149 (GPGPGEPPPA) the composition is skewed to pro residues. The span at 150 to 161 (QQEAESTPAAQA) shows a compositional bias: low complexity. Residues 172–198 (PTESTSQETPEQSDKQTTPVQGAKSKQ) are compositionally biased toward polar residues. Over residues 237–246 (DVGSSSDTDS) the composition is skewed to low complexity. Residues 651–653 (HGG) carry the Involved in the stabilization of the negatively charged intermediate by the formation of the oxyanion hole motif. Residue Ser-725 is part of the active site. Positions 838-930 (KSQKMSEPIA…EAEAKNELSP (93 aa)) are disordered. The residue at position 853 (Ser-853) is a Phosphoserine. Residue Ser-855 is modified to Phosphoserine; by AMPK. Positions 882 to 908 (RGNSETSSDTPEMSLSAETLSPSTPSD) are enriched in polar residues. Residues Ser-897, Ser-929, Ser-950, and Ser-951 each carry the phosphoserine modification. Residues Asp-994 and His-1024 contribute to the active site. The segment at 1055 to 1076 (AGAGPSGETGAAGVDGGCGGRH) is disordered. Gly residues predominate over residues 1067–1076 (GVDGGCGGRH).

Belongs to the 'GDXG' lipolytic enzyme family. In terms of assembly, monomer and homodimer. Interacts with CAVIN1 in the adipocyte cytoplasm. Interacts with PLIN5. Phosphorylation by AMPK reduces its translocation towards the lipid droplets. In terms of tissue distribution, testis.

It is found in the cell membrane. The protein localises to the membrane. The protein resides in the caveola. Its subcellular location is the cytoplasm. It localises to the cytosol. It is found in the lipid droplet. The catalysed reaction is a diacylglycerol + H2O = a monoacylglycerol + a fatty acid + H(+). The enzyme catalyses a triacylglycerol + H2O = a diacylglycerol + a fatty acid + H(+). It catalyses the reaction a monoacylglycerol + H2O = glycerol + a fatty acid + H(+). It carries out the reaction Hydrolyzes glycerol monoesters of long-chain fatty acids.. The catalysed reaction is 1,2-di-(9Z-octadecenoyl)-glycerol + (9Z)-octadecenoate + H(+) = 1,2,3-tri-(9Z-octadecenoyl)-glycerol + H2O. The enzyme catalyses 2,3-di-(9Z)-octadecenoyl-sn-glycerol + H2O = 2-(9Z-octadecenoyl)-glycerol + (9Z)-octadecenoate + H(+). It catalyses the reaction cholesteryl (9Z-octadecenoate) + H2O = cholesterol + (9Z)-octadecenoate + H(+). It carries out the reaction 1,2,3-tri-(9Z-octadecenoyl)-glycerol + H2O = di-(9Z)-octadecenoylglycerol + (9Z)-octadecenoate + H(+). The catalysed reaction is all-trans-retinyl hexadecanoate + H2O = all-trans-retinol + hexadecanoate + H(+). The enzyme catalyses 1,2-di-(9Z-octadecenoyl)-glycerol + H2O = (9Z-octadecenoyl)-glycerol + (9Z)-octadecenoate + H(+). It catalyses the reaction 2-(5Z,8Z,11Z,14Z-eicosatetraenoyl)-glycerol + H2O = glycerol + (5Z,8Z,11Z,14Z)-eicosatetraenoate + H(+). It carries out the reaction 1-(9Z-octadecenoyl)-glycerol + H2O = glycerol + (9Z)-octadecenoate + H(+). The catalysed reaction is 2-(9Z-octadecenoyl)-glycerol + H2O = glycerol + (9Z)-octadecenoate + H(+). The enzyme catalyses 1-O-hexadecyl-2-acetyl-sn-glycerol + H2O = 1-O-hexadecyl-sn-glycerol + acetate + H(+). It catalyses the reaction 1,2-di-(9Z-octadecenoyl)-sn-glycerol + H2O = (9Z-octadecenoyl)-glycerol + (9Z)-octadecenoate + H(+). It carries out the reaction 1,3-di-(9Z-octadecenoyl)-glycerol + H2O = 1-(9Z-octadecenoyl)-glycerol + (9Z)-octadecenoate + H(+). The catalysed reaction is 1,2-di-(9Z-octadecenoyl)-glycerol + H2O = 2-(9Z-octadecenoyl)-glycerol + (9Z)-octadecenoate + H(+). The protein operates within glycerolipid metabolism; triacylglycerol degradation. Its activity is regulated as follows. Retinyl ester hydrolase is inhibited by bis-p-nitrophenyl phosphate. Lipase with broad substrate specificity, catalyzing the hydrolysis of triacylglycerols (TAGs), diacylglycerols (DAGs), monoacylglycerols (MAGs), cholesteryl esters and retinyl esters. Shows a preferential hydrolysis of DAGs over TAGs and MAGs and preferentially hydrolyzes the fatty acid (FA) esters at the sn-3 position of the glycerol backbone in DAGs. Preferentially hydrolyzes FA esters at the sn-1 and sn-2 positions of the glycerol backbone in TAGs. Catalyzes the hydrolysis of 2-arachidonoylglycerol, an endocannabinoid and of 2-acetyl monoalkylglycerol ether, the penultimate precursor of the pathway for de novo synthesis of platelet-activating factor. In adipose tissue and heart, it primarily hydrolyzes stored triglycerides to free fatty acids, while in steroidogenic tissues, it principally converts cholesteryl esters to free cholesterol for steroid hormone production. The chain is Hormone-sensitive lipase (LIPE) from Homo sapiens (Human).